The chain runs to 763 residues: Envelope glycoprotein H (763 aa).

A signal peptide spans 1 to 22 (MMRYSLLCTCLFLAWWAIGGRG). The Virion surface portion of the chain corresponds to 23–739 (LATPYPSTPE…RYRERTAQFI (717 aa)). The tract at residues 29–56 (STPEFSGSPGSRATSGSPGTPKSLSATP) is disordered. Residues 31-54 (PEFSGSPGSRATSGSPGTPKSLSA) show a composition bias toward polar residues. Residues asparagine 67, asparagine 84, asparagine 91, asparagine 112, asparagine 136, asparagine 148, asparagine 157, asparagine 241, asparagine 557, asparagine 606, asparagine 641, asparagine 659, and asparagine 721 are each glycosylated (N-linked (GlcNAc...) asparagine; by host). The segment at 219-283 (KDTQMLGYIT…QNERFSMVIL (65 aa)) is interaction with gL. The chain crosses the membrane as a helical span at residues 740 to 760 (IITLFILTLMFGAFLAFKIFV). The Intravirion portion of the chain corresponds to 761–763 (YCC).

Belongs to the herpesviridae glycoprotein H family. In terms of assembly, interacts with glycoprotein L (gL); this interaction is necessary for the correct processing and cell surface expression of gH. The heterodimer gH/gL seems to interact with gB trimers during fusion. In terms of processing, N-glycosylated, O-glycosylated, and sialylated.

It is found in the virion membrane. The protein localises to the host cell membrane. The protein resides in the host endosome membrane. Functionally, the heterodimer glycoprotein H-glycoprotein L is required for the fusion of viral and plasma membranes leading to virus entry into the host cell. Following initial binding to host receptor, membrane fusion is mediated by the fusion machinery composed of gB and the heterodimer gH/gL. May also be involved in the fusion between the virion envelope and the outer nuclear membrane during virion morphogenesis. The sequence is that of Envelope glycoprotein H from Equus caballus (Horse).